The following is a 123-amino-acid chain: Small ribosomal subunit protein uS13 (123 aa).

The tract at residues 95–123 (GLPVRGQKTKTNARTRKGPKKAVASKKKK) is disordered.

The protein belongs to the universal ribosomal protein uS13 family. Part of the 30S ribosomal subunit. Forms a loose heterodimer with protein S19. Forms two bridges to the 50S subunit in the 70S ribosome.

Its function is as follows. Located at the top of the head of the 30S subunit, it contacts several helices of the 16S rRNA. In the 70S ribosome it contacts the 23S rRNA (bridge B1a) and protein L5 of the 50S subunit (bridge B1b), connecting the 2 subunits; these bridges are implicated in subunit movement. Contacts the tRNAs in the A and P-sites. The sequence is that of Small ribosomal subunit protein uS13 from Clostridium acetobutylicum (strain ATCC 824 / DSM 792 / JCM 1419 / IAM 19013 / LMG 5710 / NBRC 13948 / NRRL B-527 / VKM B-1787 / 2291 / W).